A 207-amino-acid polypeptide reads, in one-letter code: Ribosomal RNA large subunit methyltransferase E (207 aa).

5 residues coordinate S-adenosyl-L-methionine: Gly51, Trp53, Asp69, Asp85, and Asp108. The active-site Proton acceptor is the Lys148.

The protein belongs to the class I-like SAM-binding methyltransferase superfamily. RNA methyltransferase RlmE family.

It is found in the cytoplasm. It catalyses the reaction uridine(2552) in 23S rRNA + S-adenosyl-L-methionine = 2'-O-methyluridine(2552) in 23S rRNA + S-adenosyl-L-homocysteine + H(+). In terms of biological role, specifically methylates the uridine in position 2552 of 23S rRNA at the 2'-O position of the ribose in the fully assembled 50S ribosomal subunit. The polypeptide is Ribosomal RNA large subunit methyltransferase E (Methanospirillum hungatei JF-1 (strain ATCC 27890 / DSM 864 / NBRC 100397 / JF-1)).